A 438-amino-acid polypeptide reads, in one-letter code: Glutaryl-CoA dehydrogenase, mitochondrial (438 aa).

Residues 1 to 44 (MALRGVSVRLLSRGPGLHVLRTWVSSAAQTEKGGRTQSQLAKSS) constitute a mitochondrion transit peptide. Substrate contacts are provided by residues 138–139 (RS) and serine 186. Residues 177–186 (FGLTEPNSGS) and 212–214 (WIT) each bind FAD. The residue at position 240 (lysine 240) is an N6-acetyllysine. Substrate is bound at residue 287-294 (FGCLNNAR). FAD-binding positions include arginine 319, glutamine 330, and 387-391 (DMLGG). Catalysis depends on glutamate 414, which acts as the Proton acceptor. Glycine 415 contributes to the substrate binding site. FAD contacts are provided by residues 416 to 418 (THD) and phenylalanine 434.

The protein belongs to the acyl-CoA dehydrogenase family. In terms of assembly, homotetramer. Requires FAD as cofactor. As to expression, isoform Long and isoform Short are expressed in fibroblasts and liver.

It is found in the mitochondrion matrix. The catalysed reaction is glutaryl-CoA + oxidized [electron-transfer flavoprotein] + 2 H(+) = (2E)-butenoyl-CoA + reduced [electron-transfer flavoprotein] + CO2. It participates in amino-acid metabolism; lysine degradation. It functions in the pathway amino-acid metabolism; tryptophan metabolism. Its activity is regulated as follows. Strongly inhibited by MCPA-CoA, a metabolite of hypoglycin which is present in unripened fruit of the ackee tree. Functionally, catalyzes the oxidative decarboxylation of glutaryl-CoA to crotonyl-CoA and CO(2) in the degradative pathway of L-lysine, L-hydroxylysine, and L-tryptophan metabolism. It uses electron transfer flavoprotein as its electron acceptor. Isoform Short is inactive. This chain is Glutaryl-CoA dehydrogenase, mitochondrial (GCDH), found in Homo sapiens (Human).